The primary structure comprises 275 residues: Monooxygenase af470 (275 aa).

The enzyme catalyses prefumagillin + NADPH + 2 O2 = fumagillin + acetaldehyde + NADP(+) + H2O. The protein operates within secondary metabolite biosynthesis; terpenoid biosynthesis. Monooxygenase; part of the gene cluster that mediates the biosynthesis of fumagillin, a meroterpenoid that has numerous biological activities including irreversible inhibition of human type 2 methionine aminopeptidase (METAP2). Within the pathway, the monooxygenase af470 catalyzes the oxidative cleavage of prefumagillin to yield the final compound of the pathway, fumagillin. The pathway begins with the conversion of farnesyl pyrophosphate (FPP) to beta-trans-bergamotene by the membrane-bound beta-trans-bergamotene synthase af520. The multifunctional cytochrome P450 monooxygenase af510 then converts beta-trans-bergamotene into 5-keto-demethoxyfumagillol via several oxydation steps. 5-keto-demethoxyfumagillol is then subjected to successive C-6 hydroxylation and O-methylation by the dioxygenase af480 and O-methyltransferase af390-400, respectively, to yield 5-keto-fumagillol, which is then stereoselectively reduced by the keto-reductase af490 to 5R-hydroxy-seco-sesquiterpene. The next step is the polyketide transferase af380-catalyzed transfer of a dodecapentaenoyl group synthesized by the polyketide synthase af370 onto 5R-hydroxy-seco-sesquiterpene which leads to the production of prefumagillin. Finally, oxidative cleavage by the monooxygenase af470 converts prefumagillin to fumagillin. The chain is Monooxygenase af470 from Aspergillus fumigatus (strain ATCC MYA-4609 / CBS 101355 / FGSC A1100 / Af293) (Neosartorya fumigata).